A 339-amino-acid polypeptide reads, in one-letter code: Heat stress transcription factor C-1a (339 aa).

Residues 154–217 (EEEDAAEDVL…LAKLADDPNA (64 aa)) adopt a coiled-coil conformation. Residues 176–212 (LRHEQTAIGEELARMSQRLQATERRPDQLMSFLAKLA) form a hydrophobic repeat HR-A/B region. Residues 227–248 (AERKRRRQHLPSHEPTVCPLPP) are disordered. The Nuclear localization signal signature appears at 229–233 (RKRRR).

This sequence belongs to the HSF family. Class C subfamily. Homotrimer. Exhibits temperature-dependent phosphorylation.

The protein resides in the nucleus. Its function is as follows. Transcriptional regulator that specifically binds DNA of heat shock promoter elements (HSE). The polypeptide is Heat stress transcription factor C-1a (HSFC1A) (Oryza sativa subsp. japonica (Rice)).